The sequence spans 63 residues: Large ribosomal subunit protein eL29 (63 aa).

Residues 1–26 (MAKSKNHTAHNQTRKAHRNGIKKPKT) show a composition bias toward basic residues. The segment at 1-35 (MAKSKNHTAHNQTRKAHRNGIKKPKTYKYPSLKGV) is disordered.

The protein belongs to the eukaryotic ribosomal protein eL29 family. Component of the large ribosomal subunit. Mature ribosomes consist of a small (40S) and a large (60S) subunit. The 40S subunit contains about 32 different proteins and 1 molecule of RNA (18S). The 60S subunit contains 45 different proteins and 3 molecules of RNA (25S, 5.8S and 5S).

It is found in the cytoplasm. In terms of biological role, component of the ribosome, a large ribonucleoprotein complex responsible for the synthesis of proteins in the cell. The small ribosomal subunit (SSU) binds messenger RNAs (mRNAs) and translates the encoded message by selecting cognate aminoacyl-transfer RNA (tRNA) molecules. The large subunit (LSU) contains the ribosomal catalytic site termed the peptidyl transferase center (PTC), which catalyzes the formation of peptide bonds, thereby polymerizing the amino acids delivered by tRNAs into a polypeptide chain. The nascent polypeptides leave the ribosome through a tunnel in the LSU and interact with protein factors that function in enzymatic processing, targeting, and the membrane insertion of nascent chains at the exit of the ribosomal tunnel. In Candida albicans (strain SC5314 / ATCC MYA-2876) (Yeast), this protein is Large ribosomal subunit protein eL29.